A 95-amino-acid polypeptide reads, in one-letter code: Large ribosomal subunit protein uL23 (95 aa).

The protein belongs to the universal ribosomal protein uL23 family. Part of the 50S ribosomal subunit. Contacts protein L29, and trigger factor when it is bound to the ribosome.

Its function is as follows. One of the early assembly proteins it binds 23S rRNA. One of the proteins that surrounds the polypeptide exit tunnel on the outside of the ribosome. Forms the main docking site for trigger factor binding to the ribosome. In Desulfotalea psychrophila (strain LSv54 / DSM 12343), this protein is Large ribosomal subunit protein uL23.